A 129-amino-acid chain; its full sequence is UPF0325 protein HCH_00487 (129 aa).

This sequence belongs to the UPF0325 family.

The polypeptide is UPF0325 protein HCH_00487 (Hahella chejuensis (strain KCTC 2396)).